The primary structure comprises 889 residues: Rho GTPase-activating protein 27 (889 aa).

One can recognise an SH3 domain in the interval V6–A69. Residues A104–R132 form a disordered region. Phosphoserine occurs at positions 156, 216, and 249. WW domains lie at P246 to E280 and V299 to E333. The span at E329–E341 shows a compositional bias: acidic residues. Residues E329–S397 form a disordered region. S347 carries the phosphoserine modification. The segment covering E383–G395 has biased composition (low complexity). The region spanning H411 to V444 is the WW 3 domain. The disordered stretch occupies residues P447–A474. S456 carries the post-translational modification Phosphoserine. The residue at position 461 (T461) is a Phosphothreonine. S466 carries the post-translational modification Phosphoserine. A PH domain is found at T496 to Q612. A disordered region spans residues E617–L655. The Rho-GAP domain occupies C697–F886.

In terms of assembly, interacts with SH3KBP1/CIN85. As to expression, expressed in germinal center B-cell, spleen, chronic lymphocytic leukemia, pancreatic cancer and lung cancer.

The protein localises to the cytoplasm. The protein resides in the membrane. In terms of biological role, rho GTPase-activating protein which may be involved in clathrin-mediated endocytosis. GTPase activators for the Rho-type GTPases act by converting them to an inactive GDP-bound state. Has activity toward CDC42 and RAC1. This Homo sapiens (Human) protein is Rho GTPase-activating protein 27.